We begin with the raw amino-acid sequence, 1102 residues long: WASH complex subunit 4 (1102 aa).

Belongs to the SWIP family. In terms of assembly, component of the WASH complex.

Its subcellular location is the early endosome. Functionally, acts at least in part as component of the WASH complex which may regulate wash nucleation-promoting factor (NPF) activity and is required for its membrane targeting during endosomal sorting. During embryogenesis, not involved in the wash-dependent developmental migration of hemocytes anteriorly from the tail. The protein is WASH complex subunit 4 of Drosophila melanogaster (Fruit fly).